The primary structure comprises 204 residues: Large ribosomal subunit protein eL15 (204 aa).

Glycine 2 carries N-myristoyl glycine lipidation. Serine 34 is modified (phosphoserine). Residue lysine 83 forms a Glycyl lysine isopeptide (Lys-Gly) (interchain with G-Cter in SUMO2) linkage. 2 positions are modified to phosphoserine: serine 97 and serine 100. Residues 165–186 (TSAGRKSRGLGKGHKFHHTIGG) are disordered. Basic residues predominate over residues 169–182 (RKSRGLGKGHKFHH).

The protein belongs to the eukaryotic ribosomal protein eL15 family. Component of the large ribosomal subunit. Interacts with IFIT1 (via TPR repeats 1-4).

The protein resides in the cytoplasm. Functionally, component of the large ribosomal subunit. The ribosome is a large ribonucleoprotein complex responsible for the synthesis of proteins in the cell. This Bos taurus (Bovine) protein is Large ribosomal subunit protein eL15 (RPL15).